A 509-amino-acid polypeptide reads, in one-letter code: Glycogen synthase (509 aa).

Lysine 47 is a binding site for ADP-alpha-D-glucose.

The protein belongs to the glycosyltransferase 1 family. Bacterial/plant glycogen synthase subfamily.

It catalyses the reaction [(1-&gt;4)-alpha-D-glucosyl](n) + ADP-alpha-D-glucose = [(1-&gt;4)-alpha-D-glucosyl](n+1) + ADP + H(+). The protein operates within glycan biosynthesis; glycogen biosynthesis. Functionally, synthesizes alpha-1,4-glucan chains using ADP-glucose. In Xanthomonas oryzae pv. oryzae (strain MAFF 311018), this protein is Glycogen synthase.